The primary structure comprises 113 residues: T cell receptor alpha variable 13-2 (113 aa).

The first 21 residues, 1–21 (MAGIRALFMYLWLQLDWVSRG), serve as a signal peptide directing secretion. In terms of domain architecture, Ig-like spans 22–113 (ESVGLHLPTL…DSAVYFCAEN (92 aa)). The cysteines at positions 43 and 110 are disulfide-linked. Asn87 is a glycosylation site (N-linked (GlcNAc...) asparagine).

Alpha-beta TR is a heterodimer composed of an alpha and beta chain; disulfide-linked. The alpha-beta TR is associated with the transmembrane signaling CD3 coreceptor proteins to form the TR-CD3 (TcR or TCR). The assembly of alpha-beta TR heterodimers with CD3 occurs in the endoplasmic reticulum where a single alpha-beta TR heterodimer associates with one CD3D-CD3E heterodimer, one CD3G-CD3E heterodimer and one CD247 homodimer forming a stable octameric structure. CD3D-CD3E and CD3G-CD3E heterodimers preferentially associate with TR alpha and TR beta chains, respectively. The association of the CD247 homodimer is the last step of TcR assembly in the endoplasmic reticulum and is required for transport to the cell surface.

The protein resides in the cell membrane. In terms of biological role, v region of the variable domain of T cell receptor (TR) alpha chain that participates in the antigen recognition. Alpha-beta T cell receptors are antigen specific receptors which are essential to the immune response and are present on the cell surface of T lymphocytes. Recognize peptide-major histocompatibility (MH) (pMH) complexes that are displayed by antigen presenting cells (APC), a prerequisite for efficient T cell adaptive immunity against pathogens. Binding of alpha-beta TR to pMH complex initiates TR-CD3 clustering on the cell surface and intracellular activation of LCK that phosphorylates the ITAM motifs of CD3G, CD3D, CD3E and CD247 enabling the recruitment of ZAP70. In turn ZAP70 phosphorylates LAT, which recruits numerous signaling molecules to form the LAT signalosome. The LAT signalosome propagates signal branching to three major signaling pathways, the calcium, the mitogen-activated protein kinase (MAPK) kinase and the nuclear factor NF-kappa-B (NF-kB) pathways, leading to the mobilization of transcription factors that are critical for gene expression and essential for T cell growth and differentiation. The T cell repertoire is generated in the thymus, by V-(D)-J rearrangement. This repertoire is then shaped by intrathymic selection events to generate a peripheral T cell pool of self-MH restricted, non-autoaggressive T cells. Post-thymic interaction of alpha-beta TR with the pMH complexes shapes TR structural and functional avidity. The protein is T cell receptor alpha variable 13-2 of Homo sapiens (Human).